Here is a 110-residue protein sequence, read N- to C-terminus: Small ubiquitin-related modifier 3 (110 aa).

Residues Lys-5 and Lys-7 each participate in a glycyl lysine isopeptide (Lys-Gly) (interchain with G-Cter in SUMO2) cross-link. Lys-11 participates in a covalent cross-link: Glycyl lysine isopeptide (Lys-Gly) (interchain with G-Cter in SUMO); alternate. A Glycyl lysine isopeptide (Lys-Gly) (interchain with G-Cter in SUMO2); alternate cross-link involves residue Lys-11. The Ubiquitin-like domain occupies 15–92 (DHINLKVAGQ…IDVFQQQTGG (78 aa)). Residues 88 to 101 (QQTGGSASRGSVPT) are compositionally biased toward polar residues. Positions 88–110 (QQTGGSASRGSVPTPNRCPDLCY) are disordered. Gly-92 participates in a covalent cross-link: Glycyl lysine isopeptide (Gly-Lys) (interchain with K-? in acceptor proteins). Positions 93 to 110 (SASRGSVPTPNRCPDLCY) are excised as a propeptide.

The protein belongs to the ubiquitin family. SUMO subfamily. As to quaternary structure, interacts with SAE2 and UBE2I. Covalently attached to a number of proteins. Interacts with USP25 (via ts SIM domain); the interaction sumoylates USP25 and inhibits its ubiquitin hydrolyzing activity. Interacts with BMAL1. Polymeric chains can be formed through Lys-11 cross-linking. Post-translationally, cleavage of precursor form by SENP1, SENP2 or SENP5 is necessary for function.

The protein localises to the cytoplasm. It localises to the nucleus. The protein resides in the PML body. Ubiquitin-like protein which can be covalently attached to target lysines either as a monomer or as a lysine-linked polymer. Does not seem to be involved in protein degradation and may function as an antagonist of ubiquitin in the degradation process. Plays a role in a number of cellular processes such as nuclear transport, DNA replication and repair, mitosis and signal transduction. Covalent attachment to its substrates requires prior activation by the E1 complex SAE1-SAE2 and linkage to the E2 enzyme UBE2I, and can be promoted by an E3 ligase such as PIAS1-4, RANBP2 or CBX4. Plays a role in the regulation of sumoylation status of SETX. This is Small ubiquitin-related modifier 3 from Mus musculus (Mouse).